Consider the following 258-residue polypeptide: uncharacterized protein (258 aa).

A run of 5 helical transmembrane segments spans residues 14–34, 53–73, 110–130, 185–205, and 238–258; these read LAFPWLSAVILNSFLLALAAI, VIIWAALGWRGYLVVLAYFFV, AALCALAIAFGPEPWQLWLAL, GLALAVLGYGVGLISFGGIIF, and GINTFLGAAIAIGIEATAQLI.

The protein belongs to the TMEM19 family.

Its subcellular location is the cell membrane. This is an uncharacterized protein from Synechocystis sp. (strain ATCC 27184 / PCC 6803 / Kazusa).